Reading from the N-terminus, the 72-residue chain is Translation initiation factor IF-1 (72 aa).

One can recognise an S1-like domain in the interval 2–72 (AKEDCIEMQG…NKGRIIFRSR (71 aa)).

The protein belongs to the IF-1 family. As to quaternary structure, component of the 30S ribosomal translation pre-initiation complex which assembles on the 30S ribosome in the order IF-2 and IF-3, IF-1 and N-formylmethionyl-tRNA(fMet); mRNA recruitment can occur at any time during PIC assembly.

Its subcellular location is the cytoplasm. Its function is as follows. One of the essential components for the initiation of protein synthesis. Stabilizes the binding of IF-2 and IF-3 on the 30S subunit to which N-formylmethionyl-tRNA(fMet) subsequently binds. Helps modulate mRNA selection, yielding the 30S pre-initiation complex (PIC). Upon addition of the 50S ribosomal subunit IF-1, IF-2 and IF-3 are released leaving the mature 70S translation initiation complex. The chain is Translation initiation factor IF-1 from Pasteurella multocida (strain Pm70).